Consider the following 66-residue polypeptide: MAKGKDVRVTIILECTSCVRNDIKKESAGISRYITQKNRHNTPSRLELRKFCAYCYKHTIHGEIKK.

This sequence belongs to the bacterial ribosomal protein bL33 family.

The protein localises to the plastid. It localises to the chloroplast. This Lepidium virginicum (Virginia pepperweed) protein is Large ribosomal subunit protein bL33c.